The primary structure comprises 192 residues: Phosphoheptose isomerase (192 aa).

The 156-residue stretch at Ile-37–Lys-192 folds into the SIS domain. Asn-52–Gly-54 lines the substrate pocket. Residues His-61 and Glu-65 each coordinate Zn(2+). Residues Glu-65, Asn-93–Asp-94, Ser-119–Ser-121, Ser-124, and Gln-172 each bind substrate. Gln-172 and His-180 together coordinate Zn(2+).

It belongs to the SIS family. GmhA subfamily. As to quaternary structure, homotetramer. It depends on Zn(2+) as a cofactor.

The protein localises to the cytoplasm. It carries out the reaction 2 D-sedoheptulose 7-phosphate = D-glycero-alpha-D-manno-heptose 7-phosphate + D-glycero-beta-D-manno-heptose 7-phosphate. The protein operates within carbohydrate biosynthesis; D-glycero-D-manno-heptose 7-phosphate biosynthesis; D-glycero-alpha-D-manno-heptose 7-phosphate and D-glycero-beta-D-manno-heptose 7-phosphate from sedoheptulose 7-phosphate: step 1/1. Catalyzes the isomerization of sedoheptulose 7-phosphate in D-glycero-D-manno-heptose 7-phosphate. The protein is Phosphoheptose isomerase of Glaesserella parasuis serovar 5 (strain SH0165) (Haemophilus parasuis).